The sequence spans 1054 residues: MSKKRVHEIAKELKGHGIELDNKEVVTELAGLGYDVKSHSSSLDDDQATAAVQKILDKRKPKQAAAPVTAKGFVVRRKVGPPTGSGVYDASQEPSQAASDVSSPPSEPVHEASGAEAAASERVPEAAAVQEPVAEAPRAAASEPAAEAPKATAPVAPEPTVEAPKAAAPVAPEPTVEAPKTEAPVAAAPIAEAPTPPARTEVPVTSGRRAASCRGAAPLPCSGKDPLALNSSPQSSAAFCPDARNPGDCDFPSTSGRWHAWPSRGSSGRFAHGAGRPSGWTFARWTSGRPRAASRRTAVQRPSGRAGAGASHGLQRRKGFGAGAQASGQPQNVTMVGGIPHAPTAPDARALRPTATQAVVISRPLIQVRRVTPTTSSAKQYPMAPGKKAIGEVREFKVVPDHAGRGRELVDVSKNKDKSPRKRGGPNDTSISKQELTDLAWGRVNIPLRGKKKKPTKKGAKTQITQMAEDKKVIKLQEGISVSDLGQRMGVRTSDIIKKLMGLGKMATANQMVDADTVELIASDYGWKVDRVGFEVEDYLPEVVARPEDARTRPPVVTVMGHVDHGKTSLLDAIRAANVASGEAGGITQHIGAYSVTTARGDITFLDTPGHEAFTSMRARGANVTDIVILVVAADDGVMPQTIEAIKHAKAAEVPIVVALNKMDVPGANPDRVKKDLANHELVPEEWGGETIMVPVSAKQKMGIDLLLENVVLQAEVLELTSNPSRPAVGAIIEGELDRGRGPVATVLVQEGTLRVGDAVVTGTDYGRVRAMNNSRGESVKEVLPGYCAEVIGLSGVPSAGDTINVVADEKAAKQIAEHRGMKERQSELSKVSRETLDQLFAKTKAGGGPKELRVVIKADVQGSAEAVKQAVQKLTTHKVKVEVIDTGVGAITESDVMRAAASKGVVLGFNVKPESGAESAAKAEGVMLRSFSIIYELIDGVRSSMEELLEPIRTERKLGRAEVRNTFNVPKLGTIAGAAVLDGVIKRGAFVRLMRENKQLFAGKMASLRRFKDDVKEVAQGFECGIGIENFNDLKAGDIIEAYEIEETRQSLT.

4 disordered regions span residues 57-213 (DKRK…AASC), 225-248 (DPLALNSSPQSSAAFCPDARNPGD), 287-315 (SGRPRAASRRTAVQRPSGRAGAGASHGLQ), and 401-436 (DHAGRGRELVDVSKNKDKSPRKRGGPNDTSISKQEL). Residues 92–104 (QEPSQAASDVSSP) show a composition bias toward polar residues. The span at 111-213 (EASGAEAAAS…VTSGRRAASC (103 aa)) shows a compositional bias: low complexity. Basic and acidic residues predominate over residues 401 to 418 (DHAGRGRELVDVSKNKDK). Residues 552–721 (TRPPVVTVMG…VLQAEVLELT (170 aa)) enclose the tr-type G domain. The interval 561–568 (GHVDHGKT) is G1. 561-568 (GHVDHGKT) provides a ligand contact to GTP. Positions 586–590 (GITQH) are G2. A G3 region spans residues 607 to 610 (DTPG). Residues 607-611 (DTPGH) and 661-664 (NKMD) each bind GTP. The tract at residues 661–664 (NKMD) is G4. The G5 stretch occupies residues 697–699 (SAK).

It belongs to the TRAFAC class translation factor GTPase superfamily. Classic translation factor GTPase family. IF-2 subfamily.

The protein resides in the cytoplasm. One of the essential components for the initiation of protein synthesis. Protects formylmethionyl-tRNA from spontaneous hydrolysis and promotes its binding to the 30S ribosomal subunits. Also involved in the hydrolysis of GTP during the formation of the 70S ribosomal complex. The chain is Translation initiation factor IF-2 (infB) from Stigmatella aurantiaca.